The chain runs to 105 residues: Large ribosomal subunit protein bL21 (105 aa).

It belongs to the bacterial ribosomal protein bL21 family. In terms of assembly, part of the 50S ribosomal subunit. Contacts protein L20.

Functionally, this protein binds to 23S rRNA in the presence of protein L20. This chain is Large ribosomal subunit protein bL21, found in Bacteroides fragilis (strain YCH46).